The primary structure comprises 61 residues: Metallothionein-2 (61 aa).

An N-acetylmethionine modification is found at methionine 1. The segment at 1–29 is beta; it reads MDPNCSCATDGSCSCSGSCKCKECKCTTC. 18 residues coordinate a divalent metal cation: cysteine 5, cysteine 7, cysteine 13, cysteine 15, cysteine 19, cysteine 21, cysteine 24, cysteine 26, cysteine 29, cysteine 33, cysteine 34, cysteine 36, cysteine 37, cysteine 41, cysteine 44, cysteine 48, cysteine 50, and cysteine 57. The alpha stretch occupies residues 30-61; sequence KKSCCSCCPVGCAKCSQGCVCKEASEKCSCCA. At serine 58 the chain carries Phosphoserine. A divalent metal cation-binding residues include cysteine 59 and cysteine 60.

Belongs to the metallothionein superfamily. Type 1 family.

Functionally, metallothioneins have a high content of cysteine residues that bind various heavy metals; these proteins are transcriptionally regulated by both heavy metals and glucocorticoids. The sequence is that of Metallothionein-2 (MT2) from Mesocricetus auratus (Golden hamster).